A 445-amino-acid chain; its full sequence is Alpha/beta hydrolase psoB (445 aa).

Serine 246 (nucleophile) is an active-site residue.

It belongs to the AB hydrolase superfamily. FUS2 hydrolase family. As to quaternary structure, homodimer.

It participates in secondary metabolite biosynthesis. In terms of biological role, alpha/beta hydrolase; part of the gene cluster that mediates the biosynthesis of pseurotin A, a competitive inhibitor of chitin synthase and an inducer of nerve-cell proliferation. The PKS-NRPS hybrid synthetase psoA is responsible for the biosynthesis of azaspirene, one of the first intermediates having the 1-oxa-7-azaspiro[4,4]-non-2-ene-4,6-dione core of pseurotin, via condensation of one acetyl-CoA, 4 malonyl-CoA, and a L-phenylalanine molecule. The dual-functional monooxygenase/methyltransferase psoF seems to be involved in the addition of the C3 methyl group onto the pseurotin scaffold. Azaspirene is then converted to synerazol through 4 steps including oxidation of C17 by the cytochrome P450 monooxygenase psoD, O-methylation of the hydroxy group of C8 by the methyltransferase psoC, and the trans-to-cis isomerization of the C13 olefin by the glutathione S-transferase psoE. The fourth step of synerazol production is performed by the dual-functional monooxygenase/methyltransferase psoF which seems to catalyze the epoxidation of the intermediate deepoxy-synerazol. Synerazol can be attacked by a water molecule nonenzymatically at two different positions to yield two diol products, pseurotin A and pseurotin D. In Aspergillus fumigatus (strain ATCC MYA-4609 / CBS 101355 / FGSC A1100 / Af293) (Neosartorya fumigata), this protein is Alpha/beta hydrolase psoB.